Consider the following 252-residue polypeptide: Aspartate/glutamate leucyltransferase (252 aa).

This sequence belongs to the R-transferase family. Bpt subfamily.

The protein resides in the cytoplasm. The catalysed reaction is N-terminal L-glutamyl-[protein] + L-leucyl-tRNA(Leu) = N-terminal L-leucyl-L-glutamyl-[protein] + tRNA(Leu) + H(+). It catalyses the reaction N-terminal L-aspartyl-[protein] + L-leucyl-tRNA(Leu) = N-terminal L-leucyl-L-aspartyl-[protein] + tRNA(Leu) + H(+). Functions in the N-end rule pathway of protein degradation where it conjugates Leu from its aminoacyl-tRNA to the N-termini of proteins containing an N-terminal aspartate or glutamate. In Agrobacterium fabrum (strain C58 / ATCC 33970) (Agrobacterium tumefaciens (strain C58)), this protein is Aspartate/glutamate leucyltransferase.